Here is a 431-residue protein sequence, read N- to C-terminus: Citrate synthase 1 (431 aa).

Catalysis depends on residues His309 and Asp366.

This sequence belongs to the citrate synthase family. As to quaternary structure, homohexamer.

It catalyses the reaction oxaloacetate + acetyl-CoA + H2O = citrate + CoA + H(+). It functions in the pathway carbohydrate metabolism; tricarboxylic acid cycle; isocitrate from oxaloacetate: step 1/2. The polypeptide is Citrate synthase 1 (gltA2) (Mycobacterium tuberculosis (strain CDC 1551 / Oshkosh)).